We begin with the raw amino-acid sequence, 212 residues long: Pyridoxine/pyridoxamine 5'-phosphate oxidase (212 aa).

Substrate is bound by residues 7–10 (RAKY) and Lys-65. Residues 60–65 (RTVLLK), 75–76 (FT), Lys-82, and Gln-104 each bind FMN. The substrate site is built by Tyr-122, Arg-126, and Ser-130. FMN is bound by residues 139–140 (QS) and Trp-184. Position 190–192 (190–192 (RLH)) interacts with substrate. Arg-194 is an FMN binding site.

Belongs to the pyridoxamine 5'-phosphate oxidase family. As to quaternary structure, homodimer. FMN serves as cofactor.

It catalyses the reaction pyridoxamine 5'-phosphate + O2 + H2O = pyridoxal 5'-phosphate + H2O2 + NH4(+). The catalysed reaction is pyridoxine 5'-phosphate + O2 = pyridoxal 5'-phosphate + H2O2. The protein operates within cofactor metabolism; pyridoxal 5'-phosphate salvage; pyridoxal 5'-phosphate from pyridoxamine 5'-phosphate: step 1/1. Its pathway is cofactor metabolism; pyridoxal 5'-phosphate salvage; pyridoxal 5'-phosphate from pyridoxine 5'-phosphate: step 1/1. Functionally, catalyzes the oxidation of either pyridoxine 5'-phosphate (PNP) or pyridoxamine 5'-phosphate (PMP) into pyridoxal 5'-phosphate (PLP). In Aliarcobacter butzleri (strain RM4018) (Arcobacter butzleri), this protein is Pyridoxine/pyridoxamine 5'-phosphate oxidase.